A 205-amino-acid polypeptide reads, in one-letter code: DNA-directed RNA polymerase RPB5 homolog (205 aa).

Belongs to the archaeal RpoH/eukaryotic RPB5 RNA polymerase subunit family. Part of the viral DNA-directed RNA polymerase that consists of 8 polII-like subunits (RPB1, RPB2, RPB3, RPB5, RPB6, RPB7, RPB9, RPB10), a capping enzyme and a termination factor.

The protein localises to the host cytoplasm. It localises to the virion. Its function is as follows. Component of the DNA-directed RNA polymerase (RNAP) that catalyzes the transcription in the cytoplasm of viral DNA into RNA using the four ribonucleoside triphosphates as substrates. The chain is DNA-directed RNA polymerase RPB5 homolog from African swine fever virus (isolate Pig/Kenya/KEN-50/1950) (ASFV).